The following is a 376-amino-acid chain: Putative glutamate--cysteine ligase 2 (376 aa).

This sequence belongs to the glutamate--cysteine ligase type 2 family. YbdK subfamily.

The enzyme catalyses L-cysteine + L-glutamate + ATP = gamma-L-glutamyl-L-cysteine + ADP + phosphate + H(+). Its function is as follows. ATP-dependent carboxylate-amine ligase which exhibits weak glutamate--cysteine ligase activity. In Corynebacterium glutamicum (strain R), this protein is Putative glutamate--cysteine ligase 2.